The primary structure comprises 737 residues: Delta and Notch-like epidermal growth factor-related receptor (737 aa).

Positions M1–G25 are cleaved as a signal peptide. Over A26–Y640 the chain is Extracellular. 2 EGF-like domains span residues A44–Q92 and V94–E133. Positions A44–E133 are interaction with NOTCH1. Intrachain disulfides connect C48-C59, C53-C80, C82-C91, C98-C108, C103-C121, and C123-C132. The N-linked (GlcNAc...) asparagine glycan is linked to N204. EGF-like domains lie at P309–E348, E349–Q390, K392–E428, K430–A466, and L468–E503. 23 cysteine pairs are disulfide-bonded: C319/C336, C338/C347, C353/C364, C358/C378, C380/C389, C396/C407, C401/C416, C418/C427, C434/C445, C439/C454, C456/C465, C472/C482, C477/C491, C493/C502, C509/C520, C514/C529, C531/C540, C547/C558, C552/C567, C569/C578, C585/C596, C590/C605, and C607/C616. An EGF-like 8; calcium-binding domain is found at E505–E541. Residues Y543 to D579 form the EGF-like 9 domain. A glycan (N-linked (GlcNAc...) asparagine) is linked at N564. The EGF-like 10; calcium-binding domain occupies D581–E617. Residues I641 to I661 traverse the membrane as a helical segment. The Cytoplasmic portion of the chain corresponds to C662 to L737. The interaction with AP1G1 and somatodendritic targeting stretch occupies residues Y677–F680. S685 carries the phosphoserine modification. Y711 is modified (phosphotyrosine). Position 714 is a phosphothreonine (T714). The residue at position 721 (Y721) is a Phosphotyrosine. The residue at position 722 (S722) is a Phosphoserine.

Interacts with AP1G1. Interacts with NOTCH1. In terms of processing, N-glycosylated. In terms of tissue distribution, specifically expressed in brain neurons (at protein level).

The protein resides in the cell membrane. In terms of biological role, mediates neuron-glia interaction during astrocytogenesis. May promote differentiation of Bergmann glia during cerebellar development by activating DELTEX-dependent NOTCH1 signaling. This Mus musculus (Mouse) protein is Delta and Notch-like epidermal growth factor-related receptor (Dner).